A 126-amino-acid chain; its full sequence is Flagellar protein FliT (126 aa).

Positions 1-50 (MASPHRLLKDYQQLLSLSQKILHLAVNGQWDTLVEQEIVYVQSVEGLVNT) are required for homodimerization. The tract at residues 60–98 (MRLHLRQILQEVMDNEAKVKQLLQKRMDELSSLMGQSLK) is fliD binding.

The protein belongs to the FliT family. Homodimer. Interacts with FliD and FlhC.

Its subcellular location is the cytoplasm. It localises to the cytosol. Dual-function protein that regulates the transcription of class 2 flagellar operons and that also acts as an export chaperone for the filament-capping protein FliD. As a transcriptional regulator, acts as an anti-FlhDC factor; it directly binds FlhC, thus inhibiting the binding of the FlhC/FlhD complex to class 2 promoters, resulting in decreased expression of class 2 flagellar operons. As a chaperone, effects FliD transition to the membrane by preventing its premature polymerization, and by directing it to the export apparatus. In Pectobacterium carotovorum subsp. carotovorum (strain PC1), this protein is Flagellar protein FliT.